The sequence spans 536 residues: Protoporphyrinogen oxidase, chloroplastic (536 aa).

The transit peptide at 1–36 directs the protein to the chloroplast; the sequence is MAAAAAAMATATSATAAPPLRIRDAARRTRRRGHVR. Residues 62 to 67, 87 to 88, and 111 to 114 contribute to the FAD site; these read GGGISG, EA, and GPNS. The interval 248–272 is disordered; sequence TIKTIQERGKNPKPPRDPRLPTPKG. Residues 252–266 show a composition bias toward basic and acidic residues; that stretch reads IQERGKNPKPPRDPR. Residue 510-512 participates in FAD binding; that stretch reads VAL.

Belongs to the protoporphyrinogen/coproporphyrinogen oxidase family. Protoporphyrinogen oxidase subfamily. FAD is required as a cofactor.

It localises to the plastid. The protein localises to the chloroplast. The catalysed reaction is protoporphyrinogen IX + 3 O2 = protoporphyrin IX + 3 H2O2. Its pathway is porphyrin-containing compound metabolism; protoporphyrin-IX biosynthesis; protoporphyrin-IX from protoporphyrinogen-IX: step 1/1. The protein operates within porphyrin-containing compound metabolism; chlorophyll biosynthesis. Its function is as follows. Catalyzes the 6-electron oxidation of protoporphyrinogen-IX to form protoporphyrin-IX. The chain is Protoporphyrinogen oxidase, chloroplastic (PPOX1) from Oryza sativa subsp. japonica (Rice).